Reading from the N-terminus, the 262-residue chain is Putative hydro-lyase RHA1_ro03475 (262 aa).

It belongs to the D-glutamate cyclase family.

This chain is Putative hydro-lyase RHA1_ro03475, found in Rhodococcus jostii (strain RHA1).